Consider the following 48-residue polypeptide: Small, acid-soluble spore protein G (48 aa).

Positions 1-16 (MSENRHENEENRRDAA) are enriched in basic and acidic residues. The disordered stretch occupies residues 1-48 (MSENRHENEENRRDAAVAKVQNSGNAKVVVSVNTDQDQAQAQSQDGED). Residues 35–48 (DQDQAQAQSQDGED) are compositionally biased toward low complexity.

This is Small, acid-soluble spore protein G (sspG) from Bacillus subtilis (strain 168).